The chain runs to 427 residues: tRNA(Ile)-lysidine synthase (427 aa).

25-30 (SGGLDS) is an ATP binding site.

It belongs to the tRNA(Ile)-lysidine synthase family.

The protein localises to the cytoplasm. The catalysed reaction is cytidine(34) in tRNA(Ile2) + L-lysine + ATP = lysidine(34) in tRNA(Ile2) + AMP + diphosphate + H(+). In terms of biological role, ligates lysine onto the cytidine present at position 34 of the AUA codon-specific tRNA(Ile) that contains the anticodon CAU, in an ATP-dependent manner. Cytidine is converted to lysidine, thus changing the amino acid specificity of the tRNA from methionine to isoleucine. This is tRNA(Ile)-lysidine synthase from Histophilus somni (strain 129Pt) (Haemophilus somnus).